The following is a 321-amino-acid chain: Annexin B10 (321 aa).

4 Annexin repeats span residues Phe-15–Met-86, Pro-87–Thr-158, Gly-171–Glu-243, and Ser-247–Gly-319.

It belongs to the annexin family.

This is Annexin B10 (AnxB10) from Drosophila melanogaster (Fruit fly).